The sequence spans 492 residues: Phytoene desaturase (lycopene-forming) (492 aa).

5–38 (VVIGAGFGGLALAIRLQAAGIPTVLLEQRDKPGG) provides a ligand contact to FAD.

It belongs to the carotenoid/retinoid oxidoreductase family. FAD serves as cofactor.

It carries out the reaction 15-cis-phytoene + 4 A = all-trans-lycopene + 4 AH2. It functions in the pathway carotenoid biosynthesis; lycopene biosynthesis. In terms of biological role, this enzyme converts phytoene into lycopene via the intermediaries of phytofluene, zeta-carotene and neurosporene by the introduction of four double bonds. The sequence is that of Phytoene desaturase (lycopene-forming) (crtI) from Pseudescherichia vulneris (Escherichia vulneris).